The sequence spans 630 residues: tRNA uridine 5-carboxymethylaminomethyl modification enzyme MnmG (630 aa).

15–20 contributes to the FAD binding site; it reads GAGHAG. Residue 276 to 290 coordinates NAD(+); that stretch reads GPRYCPSIEDKIVRF.

The protein belongs to the MnmG family. In terms of assembly, homodimer. Heterotetramer of two MnmE and two MnmG subunits. FAD is required as a cofactor.

Its subcellular location is the cytoplasm. NAD-binding protein involved in the addition of a carboxymethylaminomethyl (cmnm) group at the wobble position (U34) of certain tRNAs, forming tRNA-cmnm(5)s(2)U34. In Latilactobacillus sakei subsp. sakei (strain 23K) (Lactobacillus sakei subsp. sakei), this protein is tRNA uridine 5-carboxymethylaminomethyl modification enzyme MnmG.